A 118-amino-acid polypeptide reads, in one-letter code: MRNKFIEAFEAKQIEGKKIPEFRPGDTVRVAVEIKEGDKKRIQNFEGVVIAIKGQGAGKTFTVRKIGANNIGIERIFPLYSESIAGIEVVRKGKVRRAKLYYLRGKTGKKARIKERRD.

The protein belongs to the bacterial ribosomal protein bL19 family.

This protein is located at the 30S-50S ribosomal subunit interface and may play a role in the structure and function of the aminoacyl-tRNA binding site. This chain is Large ribosomal subunit protein bL19, found in Nautilia profundicola (strain ATCC BAA-1463 / DSM 18972 / AmH).